Consider the following 109-residue polypeptide: Nucleoid-associated protein Spea_1509 (109 aa).

A disordered region spans residues 87 to 109 (NQKEKMAEVTGGMQLPPGMKMPF).

This sequence belongs to the YbaB/EbfC family. As to quaternary structure, homodimer.

It localises to the cytoplasm. The protein resides in the nucleoid. Its function is as follows. Binds to DNA and alters its conformation. May be involved in regulation of gene expression, nucleoid organization and DNA protection. The polypeptide is Nucleoid-associated protein Spea_1509 (Shewanella pealeana (strain ATCC 700345 / ANG-SQ1)).